A 261-amino-acid polypeptide reads, in one-letter code: Ethanolamine ammonia-lyase small subunit (261 aa).

Residues valine 157, glutamate 178, and cysteine 207 each coordinate adenosylcob(III)alamin.

The protein belongs to the EutC family. The basic unit is a heterodimer which dimerizes to form tetramers. The heterotetramers trimerize; 6 large subunits form a core ring with 6 small subunits projecting outwards. It depends on adenosylcob(III)alamin as a cofactor.

It is found in the bacterial microcompartment. It carries out the reaction ethanolamine = acetaldehyde + NH4(+). It functions in the pathway amine and polyamine degradation; ethanolamine degradation. Its function is as follows. Catalyzes the deamination of various vicinal amino-alcohols to oxo compounds. Allows this organism to utilize ethanolamine as the sole source of nitrogen and carbon in the presence of external vitamin B12. The polypeptide is Ethanolamine ammonia-lyase small subunit (Rhodopseudomonas palustris (strain BisA53)).